The chain runs to 160 residues: Nucleotide-binding protein Tola_0795 (160 aa).

Belongs to the YajQ family.

Nucleotide-binding protein. The chain is Nucleotide-binding protein Tola_0795 from Tolumonas auensis (strain DSM 9187 / NBRC 110442 / TA 4).